The following is a 300-amino-acid chain: Ankyrin repeat domain-containing protein 54 (300 aa).

A disordered region spans residues 1–27 (MAAAAGDADDEPRSGHSSSEGECAVAP). A2 bears the N-acetylalanine mark. Phosphoserine occurs at positions 58 and 63. The Nuclear localization signal (NLS) motif lies at 99-117 (RRLGPTGKEVHALKRLRDS). ANK repeat units lie at residues 109–138 (HALK…DPCA), 142–171 (KGRT…DPNQ), 175–204 (LGNT…RVDA), and 208–244 (AGRT…IIHM). The LYN-binding stretch occupies residues 141 to 241 (DKGRTALHFA…EAVRLEVKQI (101 aa)). The short motif at 283 to 293 (LLASFTSLSLQ) is the Nuclear export signal (NES) element.

In terms of assembly, interacts (via ankyrin repeat region) with LYN (via SH3-domain) in an activation-independent status of LYN. Forms a multiprotein complex with LYN and HCLS1. Interacts with TSN2, VAV1, DBNL and LASP1.

The protein resides in the nucleus. It localises to the cytoplasm. Its subcellular location is the midbody. Plays an important role in regulating intracellular signaling events associated with erythroid terminal differentiation. The sequence is that of Ankyrin repeat domain-containing protein 54 (ANKRD54) from Homo sapiens (Human).